Here is a 691-residue protein sequence, read N- to C-terminus: Pleckstrin homology domain-containing family G member 7 (691 aa).

2 disordered regions span residues 1-48 (MEKT…ISTS) and 109-140 (TSEP…LQPV). One can recognise a DH domain in the interval 313–488 (MIFMNTLRYL…EGKVKWLDNF (176 aa)). Asparagine 395 is a glycosylation site (N-linked (GlcNAc...) asparagine). Residues 535 to 668 (HLLYEGKLTL…WMAQITTAIS (134 aa)) enclose the PH domain.

The sequence is that of Pleckstrin homology domain-containing family G member 7 from Homo sapiens (Human).